An 89-amino-acid polypeptide reads, in one-letter code: UPF0335 protein Nwi_0989 (89 aa).

It belongs to the UPF0335 family.

The protein is UPF0335 protein Nwi_0989 of Nitrobacter winogradskyi (strain ATCC 25391 / DSM 10237 / CIP 104748 / NCIMB 11846 / Nb-255).